A 516-amino-acid polypeptide reads, in one-letter code: Flavonoid-6-hydroxylase (516 aa).

A helical transmembrane segment spans residues 3–23 (FNAAVCAALAFISLLSYYLIW). A heme-binding site is contributed by C455.

Belongs to the cytochrome P450 family. It depends on heme as a cofactor.

It localises to the membrane. It catalyses the reaction genkwanin + reduced [NADPH--hemoprotein reductase] + O2 = scutellarein 7-methyl ether + oxidized [NADPH--hemoprotein reductase] + H2O. The catalysed reaction is (2S)-sakuranetin + reduced [NADPH--hemoprotein reductase] + O2 = (2S)-7-methylcarthamidin + oxidized [NADPH--hemoprotein reductase] + H2O + H(+). It carries out the reaction apigenin 4',7-dimethyl ether + reduced [NADPH--hemoprotein reductase] + O2 = ladanein + oxidized [NADPH--hemoprotein reductase] + H2O + H(+). The enzyme catalyses (2S)-naringenin 4',7-dimethyl ether + reduced [NADPH--hemoprotein reductase] + O2 = (2S)-carthamidin-4',7-dimethyl ether + oxidized [NADPH--hemoprotein reductase] + H2O + H(+). Its pathway is flavonoid metabolism. Functionally, 6-OH hydroxylase involved in the biosynthesis of polymethoxylated flavonoids natural products such as pebrellin, aroma compounds which contribute to the flavor of peppermint, and exhibit pharmacological activities such as anti-allergic, anti-oxidant, antibacterial, anti-proliferative, and anti-inflammatory effects. Catalyzes the 6-hydroxylation of 7-O-methylated precursors such as the conversion of genkwanin (GENK) to scutellarein-7-methyl ether (SCU7Me). Can also use apigenin-7,4'-dimethyl ether (AdM), naringenin-7-methyl ether (SAK) and naringenin-7,4'-dimethyl ether (NdM) as substrates. The protein is Flavonoid-6-hydroxylase of Mentha piperita (Peppermint).